We begin with the raw amino-acid sequence, 202 residues long: Pyrrolidone-carboxylate peptidase (202 aa).

Catalysis depends on residues E78, C141, and H165.

The protein belongs to the peptidase C15 family. In terms of assembly, homotetramer.

It localises to the cytoplasm. The enzyme catalyses Release of an N-terminal pyroglutamyl group from a polypeptide, the second amino acid generally not being Pro.. Functionally, removes 5-oxoproline from various penultimate amino acid residues except L-proline. The polypeptide is Pyrrolidone-carboxylate peptidase (Thermosipho melanesiensis (strain DSM 12029 / CIP 104789 / BI429)).